We begin with the raw amino-acid sequence, 78 residues long: Large ribosomal subunit protein bL28 (78 aa).

Residues 1–30 are disordered; it reads MAAHCQVTGAQPGFGHSISHSHRRTKRRWN. The span at 19-30 shows a compositional bias: basic residues; it reads SHSHRRTKRRWN.

The protein belongs to the bacterial ribosomal protein bL28 family.

In Kocuria rhizophila (strain ATCC 9341 / DSM 348 / NBRC 103217 / DC2201), this protein is Large ribosomal subunit protein bL28.